The primary structure comprises 325 residues: Cytochrome c1, heme protein, mitochondrial (325 aa).

A mitochondrion-targeting transit peptide spans 1–84 (MAAAAASLRR…AVALHSAVSA (84 aa)). At 85–287 (SDLELHPPSY…SEPEHDHRKR (203 aa)) the chain is on the mitochondrial intermembrane side. The region spanning 108–209 (TSIRRGFQVY…IVRARHGGED (102 aa)) is the Cytochrome c domain. Positions 121, 124, 125, and 244 each coordinate heme c. Residues 288–308 (MGLKMLLMMGLLLPLTYAMKR) traverse the membrane as a helical segment. The Mitochondrial matrix portion of the chain corresponds to 309–325 (HKWSVLKSRKLAYRPPK).

This sequence belongs to the cytochrome c family. In terms of assembly, component of the ubiquinol-cytochrome c oxidoreductase (cytochrome b-c1 complex, complex III, CIII), a multisubunit enzyme composed of 11 subunits. The complex is composed of 3 respiratory subunits cytochrome b, cytochrome c1 and Rieske protein UQCRFS1, 2 core protein subunits UQCRC1/QCR1 and UQCRC2/QCR2, and 6 low-molecular weight protein subunits UQCRH/QCR6, UQCRB/QCR7, UQCRQ/QCR8, UQCR10/QCR9, UQCR11/QCR10 and subunit 9, the cleavage product of Rieske protein UQCRFS1. The complex exists as an obligatory dimer and forms supercomplexes (SCs) in the inner mitochondrial membrane with NADH-ubiquinone oxidoreductase (complex I, CI) and cytochrome c oxidase (complex IV, CIV), resulting in different assemblies (supercomplex SCI(1)III(2)IV(1) and megacomplex MCI(2)III(2)IV(2)). Interacts with FLVCR2; this interaction occurs in the absence of heme and is disrupted upon heme binding. It depends on heme c as a cofactor.

The protein localises to the mitochondrion inner membrane. It carries out the reaction a quinol + 2 Fe(III)-[cytochrome c](out) = a quinone + 2 Fe(II)-[cytochrome c](out) + 2 H(+)(out). Its function is as follows. Component of the ubiquinol-cytochrome c oxidoreductase, a multisubunit transmembrane complex that is part of the mitochondrial electron transport chain which drives oxidative phosphorylation. The respiratory chain contains 3 multisubunit complexes succinate dehydrogenase (complex II, CII), ubiquinol-cytochrome c oxidoreductase (cytochrome b-c1 complex, complex III, CIII) and cytochrome c oxidase (complex IV, CIV), that cooperate to transfer electrons derived from NADH and succinate to molecular oxygen, creating an electrochemical gradient over the inner membrane that drives transmembrane transport and the ATP synthase. The cytochrome b-c1 complex catalyzes electron transfer from ubiquinol to cytochrome c, linking this redox reaction to translocation of protons across the mitochondrial inner membrane, with protons being carried across the membrane as hydrogens on the quinol. In the process called Q cycle, 2 protons are consumed from the matrix, 4 protons are released into the intermembrane space and 2 electrons are passed to cytochrome c. Cytochrome c1 is a catalytic core subunit containing a c-type heme. It transfers electrons from the [2Fe-2S] iron-sulfur cluster of the Rieske protein to cytochrome c. This Mus musculus (Mouse) protein is Cytochrome c1, heme protein, mitochondrial (Cyc1).